The following is a 186-amino-acid chain: Elongation factor P (186 aa).

This sequence belongs to the elongation factor P family.

The protein localises to the cytoplasm. Its pathway is protein biosynthesis; polypeptide chain elongation. Functionally, involved in peptide bond synthesis. Stimulates efficient translation and peptide-bond synthesis on native or reconstituted 70S ribosomes in vitro. Probably functions indirectly by altering the affinity of the ribosome for aminoacyl-tRNA, thus increasing their reactivity as acceptors for peptidyl transferase. The sequence is that of Elongation factor P from Streptococcus pneumoniae (strain Hungary19A-6).